Consider the following 452-residue polypeptide: Bifunctional protein GlmU (452 aa).

Positions 1–224 are pyrophosphorylase; it reads MNIVILAAGM…VWETHGVNSK (224 aa). UDP-N-acetyl-alpha-D-glucosamine contacts are provided by residues 6-9, Lys20, Gln71, 76-77, 98-100, Gly135, Glu149, Asn164, and Asn222; these read LAAG, GT, and YGD. Mg(2+) is bound at residue Asp100. Asn222 is a Mg(2+) binding site. The segment at 225-245 is linker; the sequence is VQLAELERVHQNNIARALLEH. The N-acetyltransferase stretch occupies residues 246–452; that stretch reads GVTLADPARI…GWQRPVKIKK (207 aa). UDP-N-acetyl-alpha-D-glucosamine contacts are provided by Arg328 and Lys346. Catalysis depends on His358, which acts as the Proton acceptor. UDP-N-acetyl-alpha-D-glucosamine contacts are provided by Tyr361 and Asn372. Residues Ala375, 381–382, Ser400, Ala418, and Arg435 contribute to the acetyl-CoA site; that span reads NY.

It in the N-terminal section; belongs to the N-acetylglucosamine-1-phosphate uridyltransferase family. This sequence in the C-terminal section; belongs to the transferase hexapeptide repeat family. As to quaternary structure, homotrimer. The cofactor is Mg(2+).

It localises to the cytoplasm. The catalysed reaction is alpha-D-glucosamine 1-phosphate + acetyl-CoA = N-acetyl-alpha-D-glucosamine 1-phosphate + CoA + H(+). The enzyme catalyses N-acetyl-alpha-D-glucosamine 1-phosphate + UTP + H(+) = UDP-N-acetyl-alpha-D-glucosamine + diphosphate. The protein operates within nucleotide-sugar biosynthesis; UDP-N-acetyl-alpha-D-glucosamine biosynthesis; N-acetyl-alpha-D-glucosamine 1-phosphate from alpha-D-glucosamine 6-phosphate (route II): step 2/2. Its pathway is nucleotide-sugar biosynthesis; UDP-N-acetyl-alpha-D-glucosamine biosynthesis; UDP-N-acetyl-alpha-D-glucosamine from N-acetyl-alpha-D-glucosamine 1-phosphate: step 1/1. It participates in bacterial outer membrane biogenesis; LPS lipid A biosynthesis. Its function is as follows. Catalyzes the last two sequential reactions in the de novo biosynthetic pathway for UDP-N-acetylglucosamine (UDP-GlcNAc). The C-terminal domain catalyzes the transfer of acetyl group from acetyl coenzyme A to glucosamine-1-phosphate (GlcN-1-P) to produce N-acetylglucosamine-1-phosphate (GlcNAc-1-P), which is converted into UDP-GlcNAc by the transfer of uridine 5-monophosphate (from uridine 5-triphosphate), a reaction catalyzed by the N-terminal domain. This is Bifunctional protein GlmU from Herminiimonas arsenicoxydans.